A 167-amino-acid chain; its full sequence is Ribosome maturation factor RimM (167 aa).

One can recognise a PRC barrel domain in the interval 94–165 (EHEYYYSDII…TIKITPMEGL (72 aa)).

Belongs to the RimM family. As to quaternary structure, binds ribosomal protein uS19.

Its subcellular location is the cytoplasm. Functionally, an accessory protein needed during the final step in the assembly of 30S ribosomal subunit, possibly for assembly of the head region. Essential for efficient processing of 16S rRNA. May be needed both before and after RbfA during the maturation of 16S rRNA. It has affinity for free ribosomal 30S subunits but not for 70S ribosomes. The chain is Ribosome maturation factor RimM from Staphylococcus epidermidis (strain ATCC 35984 / DSM 28319 / BCRC 17069 / CCUG 31568 / BM 3577 / RP62A).